The sequence spans 207 residues: Large ribosomal subunit protein uL4 (207 aa).

It belongs to the universal ribosomal protein uL4 family. As to quaternary structure, part of the 50S ribosomal subunit.

In terms of biological role, one of the primary rRNA binding proteins, this protein initially binds near the 5'-end of the 23S rRNA. It is important during the early stages of 50S assembly. It makes multiple contacts with different domains of the 23S rRNA in the assembled 50S subunit and ribosome. Functionally, forms part of the polypeptide exit tunnel. This is Large ribosomal subunit protein uL4 from Geobacter metallireducens (strain ATCC 53774 / DSM 7210 / GS-15).